The chain runs to 300 residues: Protein ARMCX6 (300 aa).

Over 1–6 (MGRARE) the chain is Mitochondrial intermembrane. Mitochondrion outer membrane (MOM)-targeting sequence regions lie at residues 1 to 6 (MGRARE) and 26 to 36 (KLTIGRDDSEK). A helical; Signal-anchor membrane pass occupies residues 7–27 (VGWMAAGLMIGAGACYCVYKL). The Cytoplasmic portion of the chain corresponds to 28-300 (TIGRDDSEKL…REILLETPAP (273 aa)). 2 disordered regions span residues 35 to 54 (EKLEEEGEEEWDDDQELDEE) and 69 to 99 (WTEDGDWTEPGAPGGTEDRPSGGGKANRAHP).

It belongs to the eutherian X-chromosome-specific Armcx family.

It is found in the mitochondrion. Its subcellular location is the mitochondrion outer membrane. In terms of biological role, may regulate the dynamics and distribution of mitochondria in neural cells. The polypeptide is Protein ARMCX6 (ARMCX6) (Homo sapiens (Human)).